The sequence spans 229 residues: tRNA pseudouridine synthase B (229 aa).

The active-site Nucleophile is the D52.

It belongs to the pseudouridine synthase TruB family. Type 1 subfamily.

It catalyses the reaction uridine(55) in tRNA = pseudouridine(55) in tRNA. In terms of biological role, responsible for synthesis of pseudouridine from uracil-55 in the psi GC loop of transfer RNAs. This Flavobacterium johnsoniae (strain ATCC 17061 / DSM 2064 / JCM 8514 / BCRC 14874 / CCUG 350202 / NBRC 14942 / NCIMB 11054 / UW101) (Cytophaga johnsonae) protein is tRNA pseudouridine synthase B.